Consider the following 498-residue polypeptide: ATP synthase subunit beta, chloroplastic (498 aa).

Residue T6 is modified to Phosphothreonine. Phosphoserine is present on S13. 172–179 is a binding site for ATP; it reads GGAGVGKT.

It belongs to the ATPase alpha/beta chains family. In terms of assembly, F-type ATPases have 2 components, CF(1) - the catalytic core - and CF(0) - the membrane proton channel. CF(1) has five subunits: alpha(3), beta(3), gamma(1), delta(1), epsilon(1). CF(0) has four main subunits: a(1), b(1), b'(1) and c(9-12).

It localises to the plastid. It is found in the chloroplast thylakoid membrane. The catalysed reaction is ATP + H2O + 4 H(+)(in) = ADP + phosphate + 5 H(+)(out). Its function is as follows. Produces ATP from ADP in the presence of a proton gradient across the membrane. The catalytic sites are hosted primarily by the beta subunits. This Barbarea verna (Land cress) protein is ATP synthase subunit beta, chloroplastic.